The sequence spans 1216 residues: SPOC domain-containing protein 1 (1216 aa).

Disordered regions lie at residues 1–74 (MSQA…RAAG), 166–216 (EARD…GAHS), 236–325 (NLLS…PPQS), 348–462 (RTGS…PRLE), and 511–601 (SSPS…QQEK). Residues 36 to 50 (PGLSPDGPGASSGPG) are compositionally biased toward low complexity. Over residues 177 to 190 (CDRRSPTLSKEEPP) the composition is skewed to basic and acidic residues. Residues 204–213 (RVRKKWRRQG) are compositionally biased toward basic residues. Positions 266 to 278 (SGPGEPGGSGAGC) are enriched in gly residues. Low complexity predominate over residues 314 to 325 (SLSSAAQAPPQS). Basic and acidic residues predominate over residues 436–452 (RGTDRSSDNSHQDRPEE). Residues 581–592 (EAEEDSLPEQPE) show a composition bias toward acidic residues. Residues 608–728 (VRGTVVRSMQ…IIEQQQKEPC (121 aa)) enclose the TFIIS central domain. The disordered stretch occupies residues 823-850 (QTPMPAPEMPKTRELSPTEPQDRVPPSG). The span at 832 to 844 (PKTRELSPTEPQD) shows a compositional bias: basic and acidic residues. Residues 867–970 (WEGVLDMFSI…VEHMGMVLLP (104 aa)) form the SPOC domain. Basic and acidic residues predominate over residues 1046–1055 (RYYQPDDRRP). Disordered regions lie at residues 1046–1140 (RYYQ…QHFH) and 1176–1216 (PRPL…PRKA).

In terms of assembly, interacts with DNMT3A, DNMT3C and DNMT3L. Interacts with C19orf84. Interacts with SPIN1; promoting recruitment to transposons marked with histone H3 trimethylated at both 'Lys-4' and 'Lys-9' (H3K4me3K9me3).

Its subcellular location is the nucleus. The protein resides in the chromosome. Protein adapter that acts as an essential executor of PIWIL4-piRNA pathway directed transposon DNA methylation and silencing in the male embryonic germ cells. Recruited to young transposons, which are specifically marked with histone H3 trimethylated at both 'Lys-4' and 'Lys-9' (H3K4me3K9me3), via its association with SPIN1 chromatin reader, and associates with the de novo DNA methylation machinery and repressive chromatin remodeling complexes. Following this, PIWIL4 engages with nascent transposable element transcript to direct piRNA-directed DNA methylation. Not required for piRNA biosynthesis. This Homo sapiens (Human) protein is SPOC domain-containing protein 1.